The sequence spans 933 residues: Isoleucine--tRNA ligase (933 aa).

The 'HIGH' region motif lies at 57-67 (PYANGNIHVGH). Glutamate 554 contacts L-isoleucyl-5'-AMP. The short motif at 595-599 (KMSKS) is the 'KMSKS' region element. Lysine 598 provides a ligand contact to ATP.

It belongs to the class-I aminoacyl-tRNA synthetase family. IleS type 1 subfamily. Monomer.

The protein localises to the cytoplasm. The catalysed reaction is tRNA(Ile) + L-isoleucine + ATP = L-isoleucyl-tRNA(Ile) + AMP + diphosphate. Functionally, catalyzes the attachment of isoleucine to tRNA(Ile). As IleRS can inadvertently accommodate and process structurally similar amino acids such as valine, to avoid such errors it has two additional distinct tRNA(Ile)-dependent editing activities. One activity is designated as 'pretransfer' editing and involves the hydrolysis of activated Val-AMP. The other activity is designated 'posttransfer' editing and involves deacylation of mischarged Val-tRNA(Ile). This chain is Isoleucine--tRNA ligase, found in Streptococcus pyogenes serotype M18 (strain MGAS8232).